The sequence spans 165 residues: Small ribosomal subunit protein uS5 (165 aa).

In terms of domain architecture, S5 DRBM spans 13–76 (LEENVVSINR…EDAKRHLIKV (64 aa)).

The protein belongs to the universal ribosomal protein uS5 family. Part of the 30S ribosomal subunit. Contacts proteins S4 and S8.

Functionally, with S4 and S12 plays an important role in translational accuracy. In terms of biological role, located at the back of the 30S subunit body where it stabilizes the conformation of the head with respect to the body. The sequence is that of Small ribosomal subunit protein uS5 from Oenococcus oeni (strain ATCC BAA-331 / PSU-1).